The following is a 313-amino-acid chain: Guanine nucleotide-binding protein-like 3-like protein (313 aa).

The segment covering 1–14 has biased composition (basic residues); that stretch reads MGIKKKRQSKRLTT. The interval 1–41 is disordered; sequence MGIKKKRQSKRLTTRKREGMLKRARANERKKRRMDRKMQAK. A compositionally biased stretch (basic and acidic residues) spans 15–27; the sequence is RKREGMLKRARAN. GTP is bound by residues 95-98, 178-185, and 212-215; these read SKSD, GNPGSGKN, and TLSS.

This sequence belongs to the MMR1/HSR1 GTP-binding protein family.

The protein resides in the nucleus. Its subcellular location is the nucleolus. Functionally, required for normal processing of ribosomal pre-rRNA. Required for cell proliferation. Binds GTP. The sequence is that of Guanine nucleotide-binding protein-like 3-like protein from Encephalitozoon cuniculi (strain GB-M1) (Microsporidian parasite).